The following is a 303-amino-acid chain: Cell division protein ZipA (303 aa).

Topologically, residues 1 to 6 (MMQDLR) are periplasmic. Residues 7–27 (LILIIVGAIAIIALLLHGLWT) traverse the membrane as a helical segment. The Cytoplasmic portion of the chain corresponds to 28–303 (SRKERSSLFR…RIRSTLGVQV (276 aa)). Disordered stretches follow at residues 39-61 (RPVK…DEAF), 66-85 (KPYA…EPAI), and 124-159 (EQEP…GEKE). 2 stretches are compositionally biased toward basic and acidic residues: residues 75-85 (SHQEYKAEPAI) and 139-159 (ESER…GEKE).

It belongs to the ZipA family. In terms of assembly, interacts with FtsZ via their C-terminal domains.

Its subcellular location is the cell inner membrane. In terms of biological role, essential cell division protein that stabilizes the FtsZ protofilaments by cross-linking them and that serves as a cytoplasmic membrane anchor for the Z ring. Also required for the recruitment to the septal ring of downstream cell division proteins. The chain is Cell division protein ZipA from Photorhabdus laumondii subsp. laumondii (strain DSM 15139 / CIP 105565 / TT01) (Photorhabdus luminescens subsp. laumondii).